We begin with the raw amino-acid sequence, 243 residues long: Ubiquinone/menaquinone biosynthesis C-methyltransferase UbiE (243 aa).

S-adenosyl-L-methionine-binding positions include T69, D90, and 116 to 117 (DA).

It belongs to the class I-like SAM-binding methyltransferase superfamily. MenG/UbiE family.

The enzyme catalyses a 2-demethylmenaquinol + S-adenosyl-L-methionine = a menaquinol + S-adenosyl-L-homocysteine + H(+). It carries out the reaction a 2-methoxy-6-(all-trans-polyprenyl)benzene-1,4-diol + S-adenosyl-L-methionine = a 5-methoxy-2-methyl-3-(all-trans-polyprenyl)benzene-1,4-diol + S-adenosyl-L-homocysteine + H(+). Its pathway is quinol/quinone metabolism; menaquinone biosynthesis; menaquinol from 1,4-dihydroxy-2-naphthoate: step 2/2. It functions in the pathway cofactor biosynthesis; ubiquinone biosynthesis. In terms of biological role, methyltransferase required for the conversion of demethylmenaquinol (DMKH2) to menaquinol (MKH2) and the conversion of 2-polyprenyl-6-methoxy-1,4-benzoquinol (DDMQH2) to 2-polyprenyl-3-methyl-6-methoxy-1,4-benzoquinol (DMQH2). The sequence is that of Ubiquinone/menaquinone biosynthesis C-methyltransferase UbiE from Burkholderia mallei (strain NCTC 10247).